A 251-amino-acid polypeptide reads, in one-letter code: MAVHLLIVDALNLIRRIHAVQGSPCVETCQHALDQLIMHSQPTHAVAVFDDENRSSGWRHQRLPDYKAGRPPMPEELHNEMPALRAAFEQRGVPCWSASGNEADDLAATLAVKVTQAGHQATIVSTDKGYCQLLSPTLRIRDYFQKRWLDAPFIDKEFGVQPQQLPDYWGLAGISSSKVPGVAGIGPKSATQLLVEFQSLEGIYENLDAVAEKWRKKLETHKEMAFLCRDIARLQTDMHIDGNLQQLRLVR.

Residue Asp-104 coordinates Mg(2+). Residues 160–249 (VQPQQLPDYW…IDGNLQQLRL (90 aa)) form the 5'-3' exonuclease domain. Positions 171, 172, 180, 182, and 185 each coordinate K(+). Positions 184 to 189 (GIGPKS) are interaction with DNA.

It belongs to the Xni family. Mg(2+) serves as cofactor. K(+) is required as a cofactor.

Has flap endonuclease activity. During DNA replication, flap endonucleases cleave the 5'-overhanging flap structure that is generated by displacement synthesis when DNA polymerase encounters the 5'-end of a downstream Okazaki fragment. In Escherichia coli O81 (strain ED1a), this protein is Flap endonuclease Xni.